A 1129-amino-acid chain; its full sequence is Ubiquitin carboxyl-terminal hydrolase 7 (1129 aa).

The interval 1 to 20 (MEIETDQSIEAMDTQDTQEV) is disordered. The 122-residue stretch at 101–222 (ETTFSFTVEN…NNSITLEVHV (122 aa)) folds into the MATH domain. The region spanning 241-548 (VGLKNQGATC…NAYMLVYIRQ (308 aa)) is the USP domain. Cys-250 serves as the catalytic Nucleophile. The active-site Proton acceptor is His-490. Residue Ser-1117 is modified to Phosphoserine.

Belongs to the peptidase C19 family.

It is found in the nucleus. It carries out the reaction Thiol-dependent hydrolysis of ester, thioester, amide, peptide and isopeptide bonds formed by the C-terminal Gly of ubiquitin (a 76-residue protein attached to proteins as an intracellular targeting signal).. In terms of biological role, hydrolase that deubiquitinates target proteins. The polypeptide is Ubiquitin carboxyl-terminal hydrolase 7 (Usp7) (Drosophila melanogaster (Fruit fly)).